The primary structure comprises 493 residues: Cytochrome P450 monooxygenase olcG (493 aa).

The chain crosses the membrane as a helical span at residues 15 to 35 (GILATGALVIFVALFLATFQF). Cysteine 429 contacts heme.

This sequence belongs to the cytochrome P450 family. It depends on heme as a cofactor.

It is found in the membrane. It functions in the pathway secondary metabolite biosynthesis; terpenoid biosynthesis. In terms of biological role, cytochrome P450 monooxygenase; part of the gene cluster that mediates the biosynthesis of 15-deoxyoxalicine B. The first step of the pathway is the synthesis of nicotinyl-CoA from nicotinic acid by the nicotinic acid-CoA ligase olcI. Nicotinyl-CoA is then a substrate of polyketide synthase olcA to produce 4-hydroxy-6-(3-pyridinyl)-2H-pyran-2-one (HPPO) which is further prenylated by the polyprenyl transferase olcH to yield geranylgeranyl-HPPO. Geranylgeranyl pyrophosphate is provided by the cluster-specific geranylgeranyl pyrophosphate synthase olcC. The FAD-dependent monooxygenase olcE catalyzes the epoxidation of geranylgeranyl-HPPO and the terpene cyclase olcD catalyzes the cyclization of the terpenoid component, resulting in the formation of the tricyclic terpene moiety seen in predecaturin E. The cytochrome P450 monooxygenase then catalyzes the allylic oxidation of predecaturin E, which is followed by spirocylization with concomitant loss of one molecule of water to form decaturin E. Decaturin E is the substrate of the cytochrome P450 monooxygenase olcJ which hydroxylates it at the C-29 position to form decaturin F. The short-chain dehydrogenase/reductase olcF may catalyze the oxidation of decaturin F to generate the 29-hydroxyl-27-one intermediate, and subsequent hemiacetal formation probably leads to the formation of decaturin C. The dioxygenase olcK may be a peroxisomal enzyme that catalyzes the hydroxylation of decaturin C into decaturin A once decaturin C is shuttled into the peroxisome by the MFS transporter olcL. Finally the cytochrome P450 monooxygenase olcB catalyzes the oxidative rearrangement to yield 15-deoxyoxalicine B. In the absence of olcJ, decaturin E may be shunted to a pathway in which it is oxidized to a ketone, possibly by olcF, to form decaturin D, which undergoes further allylic oxidation to yield decaturin G. Moreover, in the absence of oclK or oclL, oclB can convert decaturin C into 15-deoxyoxalicine A. The protein is Cytochrome P450 monooxygenase olcG of Penicillium canescens.